The following is a 429-amino-acid chain: Ribosomal RNA small subunit methyltransferase B (429 aa).

S-adenosyl-L-methionine is bound by residues 254–260, D277, D303, and D322; that span reads CAAPGGK. C375 functions as the Nucleophile in the catalytic mechanism.

Belongs to the class I-like SAM-binding methyltransferase superfamily. RsmB/NOP family.

The protein localises to the cytoplasm. The enzyme catalyses cytidine(967) in 16S rRNA + S-adenosyl-L-methionine = 5-methylcytidine(967) in 16S rRNA + S-adenosyl-L-homocysteine + H(+). Specifically methylates the cytosine at position 967 (m5C967) of 16S rRNA. This chain is Ribosomal RNA small subunit methyltransferase B, found in Shigella flexneri serotype 5b (strain 8401).